The primary structure comprises 164 residues: UPF0114 protein Spro_2386 (164 aa).

The next 3 helical transmembrane spans lie at 15–35 (LLAPVYFGLSLALLALSIKFF), 53–73 (LVLTLLSLIDMALVGGLLVMV), and 136–156 (LMWYVIIHLTFVLSAFVMGYL).

It belongs to the UPF0114 family.

It localises to the cell membrane. The sequence is that of UPF0114 protein Spro_2386 from Serratia proteamaculans (strain 568).